We begin with the raw amino-acid sequence, 430 residues long: Enolase (430 aa).

A (2R)-2-phosphoglycerate-binding site is contributed by Gln-165. Glu-207 (proton donor) is an active-site residue. Mg(2+) contacts are provided by Asp-244, Glu-287, and Asp-314. The (2R)-2-phosphoglycerate site is built by Lys-339, Arg-368, Ser-369, and Lys-390. The Proton acceptor role is filled by Lys-339.

It belongs to the enolase family. In terms of assembly, component of the RNA degradosome, a multiprotein complex involved in RNA processing and mRNA degradation. The cofactor is Mg(2+).

Its subcellular location is the cytoplasm. The protein localises to the secreted. It is found in the cell surface. The catalysed reaction is (2R)-2-phosphoglycerate = phosphoenolpyruvate + H2O. It participates in carbohydrate degradation; glycolysis; pyruvate from D-glyceraldehyde 3-phosphate: step 4/5. Catalyzes the reversible conversion of 2-phosphoglycerate (2-PG) into phosphoenolpyruvate (PEP). It is essential for the degradation of carbohydrates via glycolysis. The sequence is that of Enolase from Xanthomonas axonopodis pv. citri (strain 306).